Consider the following 521-residue polypeptide: Glucose-6-phosphate isomerase (521 aa).

Glu-351 functions as the Proton donor in the catalytic mechanism. Residues His-382 and Lys-491 contribute to the active site.

The protein belongs to the GPI family.

It is found in the cytoplasm. The enzyme catalyses alpha-D-glucose 6-phosphate = beta-D-fructose 6-phosphate. The protein operates within carbohydrate biosynthesis; gluconeogenesis. Its pathway is carbohydrate degradation; glycolysis; D-glyceraldehyde 3-phosphate and glycerone phosphate from D-glucose: step 2/4. Functionally, catalyzes the reversible isomerization of glucose-6-phosphate to fructose-6-phosphate. This chain is Glucose-6-phosphate isomerase, found in Polaromonas naphthalenivorans (strain CJ2).